Consider the following 428-residue polypeptide: Trigger factor (428 aa).

Residues 163-248 (GDMVVIDYKG…VHEIKEKELP (86 aa)) form the PPIase FKBP-type domain.

Belongs to the FKBP-type PPIase family. Tig subfamily.

Its subcellular location is the cytoplasm. It catalyses the reaction [protein]-peptidylproline (omega=180) = [protein]-peptidylproline (omega=0). Functionally, involved in protein export. Acts as a chaperone by maintaining the newly synthesized protein in an open conformation. Functions as a peptidyl-prolyl cis-trans isomerase. The chain is Trigger factor from Alkaliphilus metalliredigens (strain QYMF).